The primary structure comprises 372 residues: NAD(P)H-quinone oxidoreductase subunit 1 (372 aa).

Transmembrane regions (helical) follow at residues 29–49 (WIPL…LVVV), 97–117 (WLFT…YLIV), 130–150 (VGIF…LMSG), 176–196 (LAFS…IDIV), 204–224 (ILGW…IAAL), 254–274 (FGLF…VFAI), 308–328 (SLGI…AVLL), and 347–367 (FLLP…LAFP).

The protein belongs to the complex I subunit 1 family. NDH-1 is composed of at least 11 different subunits.

Its subcellular location is the cellular thylakoid membrane. The enzyme catalyses a plastoquinone + NADH + (n+1) H(+)(in) = a plastoquinol + NAD(+) + n H(+)(out). It catalyses the reaction a plastoquinone + NADPH + (n+1) H(+)(in) = a plastoquinol + NADP(+) + n H(+)(out). Its function is as follows. NDH-1 shuttles electrons from an unknown electron donor, via FMN and iron-sulfur (Fe-S) centers, to quinones in the respiratory and/or the photosynthetic chain. The immediate electron acceptor for the enzyme in this species is believed to be plastoquinone. Couples the redox reaction to proton translocation, and thus conserves the redox energy in a proton gradient. The polypeptide is NAD(P)H-quinone oxidoreductase subunit 1 (Rippkaea orientalis (strain PCC 8801 / RF-1) (Cyanothece sp. (strain PCC 8801))).